A 901-amino-acid chain; its full sequence is Alanine--tRNA ligase (901 aa).

4 residues coordinate Zn(2+): His-581, His-585, Cys-684, and His-688.

It belongs to the class-II aminoacyl-tRNA synthetase family. Zn(2+) serves as cofactor.

The protein localises to the cytoplasm. The enzyme catalyses tRNA(Ala) + L-alanine + ATP = L-alanyl-tRNA(Ala) + AMP + diphosphate. In terms of biological role, catalyzes the attachment of alanine to tRNA(Ala) in a two-step reaction: alanine is first activated by ATP to form Ala-AMP and then transferred to the acceptor end of tRNA(Ala). Also edits incorrectly charged Ser-tRNA(Ala) and Gly-tRNA(Ala) via its editing domain. The polypeptide is Alanine--tRNA ligase (Mycobacterium marinum (strain ATCC BAA-535 / M)).